A 134-amino-acid chain; its full sequence is Small ribosomal subunit protein uS8c (134 aa).

The protein belongs to the universal ribosomal protein uS8 family. As to quaternary structure, part of the 30S ribosomal subunit.

The protein resides in the plastid. In terms of biological role, one of the primary rRNA binding proteins, it binds directly to 16S rRNA central domain where it helps coordinate assembly of the platform of the 30S subunit. This chain is Small ribosomal subunit protein uS8c (rps8), found in Cuscuta reflexa (Southern Asian dodder).